A 94-amino-acid chain; its full sequence is Co-chaperonin GroES (94 aa).

The protein belongs to the GroES chaperonin family. As to quaternary structure, heptamer of 7 subunits arranged in a ring. Interacts with the chaperonin GroEL.

Its subcellular location is the cytoplasm. Together with the chaperonin GroEL, plays an essential role in assisting protein folding. The GroEL-GroES system forms a nano-cage that allows encapsulation of the non-native substrate proteins and provides a physical environment optimized to promote and accelerate protein folding. GroES binds to the apical surface of the GroEL ring, thereby capping the opening of the GroEL channel. The sequence is that of Co-chaperonin GroES from Streptococcus agalactiae.